A 306-amino-acid polypeptide reads, in one-letter code: N-acetylmuramic acid 6-phosphate etherase (306 aa).

The SIS domain occupies 55 to 218; sequence IVPRMKKGGR…STGVMIKLGK (164 aa). Glu-83 functions as the Proton donor in the catalytic mechanism. Glu-114 is an active-site residue.

This sequence belongs to the GCKR-like family. MurNAc-6-P etherase subfamily. Homodimer.

It catalyses the reaction N-acetyl-D-muramate 6-phosphate + H2O = N-acetyl-D-glucosamine 6-phosphate + (R)-lactate. The protein operates within amino-sugar metabolism; N-acetylmuramate degradation. In terms of biological role, specifically catalyzes the cleavage of the D-lactyl ether substituent of MurNAc 6-phosphate, producing GlcNAc 6-phosphate and D-lactate. In Caldanaerobacter subterraneus subsp. tengcongensis (strain DSM 15242 / JCM 11007 / NBRC 100824 / MB4) (Thermoanaerobacter tengcongensis), this protein is N-acetylmuramic acid 6-phosphate etherase.